The sequence spans 539 residues: MWSGRSSFTSLVVGVFLVYVVHTCWVMYGIVYTRPCSGDSNCIQPYLALRPKLQLSVYTTTRSSLGAENNVDLILNVEDFDVDSKFERTVNVSVPKKTRNNGTLYAYIFLHHAGILPWQDGKQVHVVSTLTTYMIPKPEEINLLTGESATQQQIEAEKKPSNALDEPVSHWRPRLTLNVMVDDFVFDGSSLPADVHRYMKMIQLGKTVHYLPILFIDQLSNRVKDLMVINRSTTELPLTVSYDKISLGRLRFWIHMQDAVYSLQQFGFSEKDADELKGIFVDTNLYLLALTFFVAAFHLLFDFLAFKSDISFWKKKKSMIGMSTKAVLWRCFSTVVIFLFLLDEQTSLLVLIPAGVGAAIELWKVKKALKITVAWRGLRPVFQFGTHSESERKTEKYDAQAMKYLSYLLYPLCVGGAVYSLLNIKYKSWYSWLINSFVNGVYAFGFLFMLPQLFVNYKMKSVAHLPWKAFTYKAFNTFIDDVFAFIITMPTSHRLACFRDDVVFLVYLYQRWLYPVDKSRVNEFGESYEEQPKRKPHPD.

At 1 to 10 the chain is on the cytoplasmic side; that stretch reads MWSGRSSFTS. A helical membrane pass occupies residues 11–31; the sequence is LVVGVFLVYVVHTCWVMYGIV. At 32 to 285 the chain is on the extracellular side; it reads YTRPCSGDSN…LKGIFVDTNL (254 aa). 2 N-linked (GlcNAc...) asparagine glycosylation sites follow: Asn-91 and Asn-101. The chain crosses the membrane as a helical span at residues 286–306; that stretch reads YLLALTFFVAAFHLLFDFLAF. Topologically, residues 307 to 325 are cytoplasmic; it reads KSDISFWKKKKSMIGMSTK. Residues 326-342 form a helical membrane-spanning segment; sequence AVLWRCFSTVVIFLFLL. The Extracellular segment spans residues 343 to 403; sequence DEQTSLLVLI…TEKYDAQAMK (61 aa). The chain crosses the membrane as a helical span at residues 404-424; the sequence is YLSYLLYPLCVGGAVYSLLNI. Topologically, residues 425–429 are cytoplasmic; that stretch reads KYKSW. The chain crosses the membrane as a helical span at residues 430–450; sequence YSWLINSFVNGVYAFGFLFML. The Extracellular portion of the chain corresponds to 451-539; the sequence is PQLFVNYKMK…EQPKRKPHPD (89 aa).

It belongs to the CLPTM1 family.

The protein resides in the endoplasmic reticulum membrane. The enzyme catalyses a 6-(alpha-D-glucosaminyl)-1-(1,2-diacyl-sn-glycero-3-phospho)-1D-myo-inositol(in) = a 6-(alpha-D-glucosaminyl)-1-(1,2-diacyl-sn-glycero-3-phospho)-1D-myo-inositol(out). The catalysed reaction is 6-(alpha-D-glucosaminyl)-(1-octadecanoyl,2-(9Z)-octadecenoyl-sn-glycero-3-phospho)-1D-myo-inositol(in) = 6-(alpha-D-glucosaminyl)-(1-octadecanoyl,2-(9Z)-octadecenoyl-sn-glycero-3-phospho)-1D-myo-inositol(out). It carries out the reaction a 1,2-diacyl-sn-glycero-3-phospho-(1D-myo-inositol)(in) = a 1,2-diacyl-sn-glycero-3-phospho-(1D-myo-inositol)(out). It catalyses the reaction a 1,2-diacyl-sn-glycero-3-phosphocholine(in) = a 1,2-diacyl-sn-glycero-3-phosphocholine(out). The enzyme catalyses a 1,2-diacyl-sn-glycero-3-phosphoethanolamine(in) = a 1,2-diacyl-sn-glycero-3-phosphoethanolamine(out). Functionally, scramblase that mediates the translocation of glucosaminylphosphatidylinositol (alpha-D-GlcN-(1-6)-(1,2-diacyl-sn-glycero-3-phospho)-1D-myo-inositol, GlcN-PI) across the endoplasmic reticulum (ER) membrane, from the cytosolic leaflet to the luminal leaflet of the ER membrane, where it participates in the biosynthesis of glycosylphosphatidylinositol (GPI). GPI is a lipid glycoconjugate involved in post-translational modification of proteins. Can also translocate 1,2-diacyl-sn-glycero-3-phospho-(1D-myo-inositol) (phosphatidylinositol or PI), as well as several other phospholipids (1,2-diacyl-sn-glycero-3-phosphocholine, 1,2-diacyl-sn-glycero-3-phosphoethanolamine), and N-acetylglucosaminylphosphatidylinositol (GlcNAc-PI) in vitro. The protein is Lipid scramblase CLPTM1L (Clptm1l) of Mus musculus (Mouse).